We begin with the raw amino-acid sequence, 259 residues long: MSFKRPCPLARYNRTSYFYPTFSESSEHSHLLVSPVLVASAVIGVVIILSCITIIVGSIRRDRQARLQRHRHRHHRHHHHHHHHRRRRHREYEHGYVSDEHTYSRSSRRMRYACSSSEDWPPPLDISSDGDVDATVLRELYPDSPPGYEECVGPGATQLYVPTDAPPPYSLTDSCPTLDGTSDSGSGHSPGRHQQEQRTPAQGGLHTVSMDTLPPYEAVCGAGPPSGLLPLPGPDPGPRGSQGSPTPTRAPASGPERIV.

The helical transmembrane segment at 36 to 56 (VLVASAVIGVVIILSCITIIV) threads the bilayer. The segment covering 71-89 (RHRHHRHHHHHHHHRRRRH) has biased composition (basic residues). Disordered regions lie at residues 71 to 91 (RHRH…RHRE) and 152 to 259 (VGPG…ERIV). A compositionally biased stretch (polar residues) spans 171–187 (LTDSCPTLDGTSDSGSG). The segment covering 221–230 (GAGPPSGLLP) has biased composition (low complexity).

Interacts with NEDD4.

It is found in the membrane. This is Protein BEAN1 (BEAN1) from Homo sapiens (Human).